We begin with the raw amino-acid sequence, 307 residues long: Aspartate carbamoyltransferase catalytic subunit (307 aa).

Positions 54 and 55 each coordinate carbamoyl phosphate. Lysine 83 contributes to the L-aspartate binding site. Carbamoyl phosphate is bound by residues arginine 104, histidine 132, and glutamine 135. L-aspartate contacts are provided by arginine 165 and arginine 228. Positions 267 and 268 each coordinate carbamoyl phosphate.

This sequence belongs to the aspartate/ornithine carbamoyltransferase superfamily. ATCase family. In terms of assembly, heterododecamer (2C3:3R2) of six catalytic PyrB chains organized as two trimers (C3), and six regulatory PyrI chains organized as three dimers (R2).

The catalysed reaction is carbamoyl phosphate + L-aspartate = N-carbamoyl-L-aspartate + phosphate + H(+). It functions in the pathway pyrimidine metabolism; UMP biosynthesis via de novo pathway; (S)-dihydroorotate from bicarbonate: step 2/3. In terms of biological role, catalyzes the condensation of carbamoyl phosphate and aspartate to form carbamoyl aspartate and inorganic phosphate, the committed step in the de novo pyrimidine nucleotide biosynthesis pathway. The protein is Aspartate carbamoyltransferase catalytic subunit of Clostridium botulinum (strain Langeland / NCTC 10281 / Type F).